The chain runs to 194 residues: GTP cyclohydrolase 1 (194 aa).

Zn(2+)-binding residues include C83, H86, and C155.

The protein belongs to the GTP cyclohydrolase I family. In terms of assembly, toroid-shaped homodecamer, composed of two pentamers of five dimers.

The catalysed reaction is GTP + H2O = 7,8-dihydroneopterin 3'-triphosphate + formate + H(+). The protein operates within cofactor biosynthesis; 7,8-dihydroneopterin triphosphate biosynthesis; 7,8-dihydroneopterin triphosphate from GTP: step 1/1. This chain is GTP cyclohydrolase 1 (folE), found in Streptococcus pyogenes serotype M1.